The following is a 38-amino-acid chain: Large ribosomal subunit protein bL36A (38 aa).

This sequence belongs to the bacterial ribosomal protein bL36 family.

In Cronobacter sakazakii (strain ATCC BAA-894) (Enterobacter sakazakii), this protein is Large ribosomal subunit protein bL36A.